A 264-amino-acid polypeptide reads, in one-letter code: Small ribosomal subunit protein uS2 (264 aa).

This sequence belongs to the universal ribosomal protein uS2 family.

This chain is Small ribosomal subunit protein uS2, found in Helicobacter pylori (strain P12).